The primary structure comprises 471 residues: Alpha-galactosidase 6 (471 aa).

Positions 1–18 (MFAFYFLTACISLKGVFG) are cleaved as a signal peptide. Cys-42 and Cys-74 are disulfide-bonded. Substrate-binding residues include Asp-72 and Asp-73. An N-linked (GlcNAc...) asparagine glycan is attached at Asn-105. Cys-121 and Cys-151 are disulfide-bonded. Lys-147 is a binding site for substrate. Asp-149 acts as the Nucleophile in catalysis. Asn-175 carries an N-linked (GlcNAc...) asparagine glycan. Arg-205 serves as a coordination point for substrate. Asp-209 serves as the catalytic Proton donor. Cystine bridges form between Cys-221–Cys-237 and Cys-223–Cys-230. Gln-251 lines the substrate pocket. N-linked (GlcNAc...) asparagine glycans are attached at residues Asn-270, Asn-370, Asn-403, Asn-422, Asn-435, and Asn-454.

It belongs to the glycosyl hydrolase 27 family. In terms of assembly, homotetramer.

The protein resides in the secreted. It carries out the reaction Hydrolysis of terminal, non-reducing alpha-D-galactose residues in alpha-D-galactosides, including galactose oligosaccharides, galactomannans and galactolipids.. This Saccharomyces cerevisiae (Baker's yeast) protein is Alpha-galactosidase 6 (MEL6).